We begin with the raw amino-acid sequence, 513 residues long: ATP synthase subunit alpha (513 aa).

Residue 169–176 (GDRQTGKT) participates in ATP binding.

It belongs to the ATPase alpha/beta chains family. As to quaternary structure, F-type ATPases have 2 components, CF(1) - the catalytic core - and CF(0) - the membrane proton channel. CF(1) has five subunits: alpha(3), beta(3), gamma(1), delta(1), epsilon(1). CF(0) has three main subunits: a(1), b(2) and c(9-12). The alpha and beta chains form an alternating ring which encloses part of the gamma chain. CF(1) is attached to CF(0) by a central stalk formed by the gamma and epsilon chains, while a peripheral stalk is formed by the delta and b chains.

The protein resides in the cell inner membrane. It catalyses the reaction ATP + H2O + 4 H(+)(in) = ADP + phosphate + 5 H(+)(out). In terms of biological role, produces ATP from ADP in the presence of a proton gradient across the membrane. The alpha chain is a regulatory subunit. The protein is ATP synthase subunit alpha of Yersinia pseudotuberculosis serotype O:1b (strain IP 31758).